Consider the following 234-residue polypeptide: N-acetyl-alpha-D-glucosaminyl L-malate deacetylase 1 (234 aa).

His12, Asp15, and His113 together coordinate Zn(2+).

It belongs to the PIGL family. As to quaternary structure, homohexamer. Trimer of dimers. Zn(2+) is required as a cofactor.

The catalysed reaction is (S)-malyl N-acetyl-alpha-D-glucosaminide + H2O = (S)-malyl alpha-D-glucosaminide + acetate. Its function is as follows. Involved in bacillithiol (BSH) biosynthesis. Catalyzes the second step of the pathway, the deacetylation of N-acetylglucosaminylmalate (GlcNAc-Mal) to glucosamine malate (GlcN-Mal). In Bacillus cereus (strain ATCC 14579 / DSM 31 / CCUG 7414 / JCM 2152 / NBRC 15305 / NCIMB 9373 / NCTC 2599 / NRRL B-3711), this protein is N-acetyl-alpha-D-glucosaminyl L-malate deacetylase 1.